The chain runs to 365 residues: DNA replication and repair protein RecF (365 aa).

30-37 (GDNGEGKT) contacts ATP.

It belongs to the RecF family.

It localises to the cytoplasm. Functionally, the RecF protein is involved in DNA metabolism; it is required for DNA replication and normal SOS inducibility. RecF binds preferentially to single-stranded, linear DNA. It also seems to bind ATP. The sequence is that of DNA replication and repair protein RecF from Leptospira interrogans serogroup Icterohaemorrhagiae serovar copenhageni (strain Fiocruz L1-130).